A 330-amino-acid polypeptide reads, in one-letter code: PDZ and LIM domain protein 4 (330 aa).

A PDZ domain is found at 8-84 (RGPSPWGFRL…QLLLSVSRAE (77 aa)). Disordered regions lie at residues 106-152 (EPEP…SSSA) and 163-182 (LHIS…RNRN). The segment covering 139-152 (QHPQPSRPHASSSA) has biased composition (polar residues). The 51-residue stretch at 255–305 (CTRCGNGIVGTIVKARDKLYHPECFMCDDCGLNLKQRGYFFIEEQLYCETH) folds into the LIM zinc-binding domain.

As to quaternary structure, interacts (via LIM domain) with PTPN13. Interacts (via PDZ domain) with ACTN1.

The protein resides in the cytoplasm. It is found in the cytoskeleton. The protein localises to the cell projection. It localises to the dendritic spine. Its subcellular location is the early endosome membrane. The protein resides in the recycling endosome membrane. It is found in the nucleus. The protein localises to the perinuclear region. It localises to the lamellipodium. Its subcellular location is the synapse. The protein resides in the synaptosome. In terms of biological role, suppresses SRC activation by recognizing and binding to active SRC and facilitating PTPN13-mediated dephosphorylation of SRC 'Tyr-419' leading to its inactivation. Inactivated SRC dissociates from this protein allowing the initiation of a new SRC inactivation cycle. Involved in reorganization of the actin cytoskeleton. In nonmuscle cells, binds to ACTN1 (alpha-actinin-1), increases the affinity of ACTN1 to F-actin (filamentous actin), and promotes formation of actin stress fibers. Involved in regulation of the synaptic AMPA receptor transport in dendritic spines of hippocampal pyramidal neurons directing the receptors toward an insertion at the postsynaptic membrane. Links endosomal surface-internalized GRIA1-containing AMPA receptors to the alpha-actinin/actin cytoskeleton. Increases AMPA receptor-mediated excitatory postsynaptic currents in neurons. This is PDZ and LIM domain protein 4 (PDLIM4) from Gallus gallus (Chicken).